Consider the following 146-residue polypeptide: VPIQKVQDDTKTLIKTIVTRISDISHTQSVSSKQKVTGLDFIPGLHPILTLSKMDQTLAVYQQILTSMPSRNMIQISNDLENLRDLLHVLAFSKSCHLPWASGLETLDSLGGVLEASGYSTEVVALSRLQGSLQDMLWQLDLSPGC.

An intrachain disulfide couples cysteine 96 to cysteine 146.

The protein belongs to the leptin family.

The protein localises to the secreted. In terms of biological role, key player in the regulation of energy balance and body weight control. Once released into the circulation, has central and peripheral effects by binding LEPR, found in many tissues, which results in the activation of several major signaling pathways. In the hypothalamus, acts as an appetite-regulating factor that induces a decrease in food intake and an increase in energy consumption by inducing anorexinogenic factors and suppressing orexigenic neuropeptides, also regulates bone mass and secretion of hypothalamo-pituitary-adrenal hormones. In the periphery, increases basal metabolism, influences reproductive function, regulates pancreatic beta-cell function and insulin secretion, is pro-angiogenic for endothelial cell and affects innate and adaptive immunity. In the arcuate nucleus of the hypothalamus, activates by depolarization POMC neurons inducing FOS and SOCS3 expression to release anorexigenic peptides and inhibits by hyperpolarization NPY neurons inducing SOCS3 with a consequent reduction on release of orexigenic peptides. In addition to its known satiety inducing effect, has a modulatory role in nutrient absorption. In the intestine, reduces glucose absorption by enterocytes by activating PKC and leading to a sequential activation of p38, PI3K and ERK signaling pathways which exerts an inhibitory effect on glucose absorption. Acts as a growth factor on certain tissues, through the activation of different signaling pathways increases expression of genes involved in cell cycle regulation such as CCND1, via JAK2-STAT3 pathway, or VEGFA, via MAPK1/3 and PI3K-AKT1 pathways. May also play an apoptotic role via JAK2-STAT3 pathway and up-regulation of BIRC5 expression. Pro-angiogenic, has mitogenic activity on vascular endothelial cells and plays a role in matrix remodeling by regulating the expression of matrix metalloproteinases (MMPs) and tissue inhibitors of metalloproteinases (TIMPs). In innate immunity, modulates the activity and function of neutrophils by increasing chemotaxis and the secretion of oxygen radicals. Increases phagocytosis by macrophages and enhances secretion of pro-inflammatory mediators. Increases cytotoxic ability of NK cells. Plays a pro-inflammatory role, in synergy with IL1B, by inducing NOS2 which promotes the production of IL6, IL8 and Prostaglandin E2, through a signaling pathway that involves JAK2, PI3K, MAP2K1/MEK1 and MAPK14/p38. In adaptive immunity, promotes the switch of memory T-cells towards T helper-1 cell immune responses. Increases CD4(+)CD25(-) T-cell proliferation and reduces autophagy during TCR (T-cell receptor) stimulation, through MTOR signaling pathway activation and BCL2 up-regulation. The sequence is that of Leptin (LEP) from Gorilla gorilla gorilla (Western lowland gorilla).